The primary structure comprises 253 residues: MSLALEQATLIQENLPQGNSLPRHIAIIMDGNRRWQRKHEQFCQKRAISGHRQGADSIPQIVDTALHLGVEALTLFAFSTENFSRSKSEVAELFSLFNSQLRSKLSFLHDREIRLRCIGDLSKLPQELQNNIEQASSATAHYSRMELIFAINYGSKDELVRAFKELHQDLASKKISVNDISEELISSYLDTSGLPDPDLLIRTGGEMRVSNFLLWQIAYTELYVTDVLWPDFTANDLLEAIKTYQQRSRRGGK.

Asp30 is an active-site residue. Asp30 serves as a coordination point for Mg(2+). Substrate-binding positions include 31–34 (GNRR), Trp35, His51, and 79–81 (STE). The active-site Proton acceptor is the Asn82. Residues Phe83, Arg85, Arg202, and 208–210 (RVS) each bind substrate. Glu221 is a Mg(2+) binding site.

Belongs to the UPP synthase family. In terms of assembly, homodimer. It depends on Mg(2+) as a cofactor.

Functionally, catalyzes the condensation of isopentenyl diphosphate (IPP) with allylic pyrophosphates generating different type of terpenoids. This is Isoprenyl transferase from Chlamydia trachomatis serovar D (strain ATCC VR-885 / DSM 19411 / UW-3/Cx).